The following is a 272-amino-acid chain: Acidic leucine-rich nuclear phosphoprotein 32 family member B (272 aa).

LRR repeat units follow at residues 18-38 (AVRE…EGLT), 43-64 (NLEF…PKLP), 65-87 (KLKK…AEEL), and 89-110 (SLTH…EPLK). Residues 123 to 161 (CEVTNRSDYRETVFRLLPQLSYLDGYDREDQEAPDSDVE) enclose the LRRCT domain. Residues 149–254 (DREDQEAPDS…DEDEDEEEEE (106 aa)) show a composition bias toward acidic residues. The tract at residues 149 to 272 (DREDQEAPDS…RETDDEGEDD (124 aa)) is disordered. Phosphoserine occurs at positions 164 and 171. Residues 255–265 (SGKGEKRKRET) show a composition bias toward basic and acidic residues. Positions 260-263 (KRKR) match the Nuclear localization signal motif. The residue at position 265 (Thr-265) is a Phosphothreonine.

The protein belongs to the ANP32 family. In terms of assembly, interacts with histones H3 and H4. Interacts with KLF5; this interaction induces promoter region-specific histone incorporation and inhibition of histone acetylation by ANP32B. Post-translationally, some glutamate residues are glycylated by TTLL8. This modification occurs exclusively on glutamate residues and results in a glycine chain on the gamma-carboxyl group. Directly cleaved by caspase-3/CASP3.

It localises to the nucleus. In terms of biological role, multifunctional protein that is involved in the regulation of many processes including cell proliferation, apoptosis, cell cycle progression or transcription. Regulates the proliferation of neuronal stem cells, differentiation of leukemic cells and progression from G1 to S phase of the cell cycle. As negative regulator of caspase-3-dependent apoptosis, may act as an antagonist of ANP32A in regulating tissue homeostasis. Exhibits histone chaperone properties, able to recruit histones to certain promoters, thus regulating the transcription of specific genes. Also plays an essential role in the nucleocytoplasmic transport of specific mRNAs via the uncommon nuclear mRNA export receptor XPO1/CRM1. Participates in the regulation of adequate adaptive immune responses by acting on mRNA expression and cell proliferation. This chain is Acidic leucine-rich nuclear phosphoprotein 32 family member B (Anp32b), found in Mus musculus (Mouse).